The chain runs to 233 residues: Phosphatidylserine decarboxylase proenzyme (233 aa).

The active-site Schiff-base intermediate with substrate; via pyruvic acid is S188. Pyruvic acid (Ser); by autocatalysis is present on S188.

This sequence belongs to the phosphatidylserine decarboxylase family. PSD-A subfamily. In terms of assembly, heterodimer of a large membrane-associated beta subunit and a small pyruvoyl-containing alpha subunit. Pyruvate serves as cofactor. In terms of processing, is synthesized initially as an inactive proenzyme. Formation of the active enzyme involves a self-maturation process in which the active site pyruvoyl group is generated from an internal serine residue via an autocatalytic post-translational modification. Two non-identical subunits are generated from the proenzyme in this reaction, and the pyruvate is formed at the N-terminus of the alpha chain, which is derived from the carboxyl end of the proenzyme. The post-translation cleavage follows an unusual pathway, termed non-hydrolytic serinolysis, in which the side chain hydroxyl group of the serine supplies its oxygen atom to form the C-terminus of the beta chain, while the remainder of the serine residue undergoes an oxidative deamination to produce ammonia and the pyruvoyl prosthetic group on the alpha chain.

It localises to the cell membrane. It catalyses the reaction a 1,2-diacyl-sn-glycero-3-phospho-L-serine + H(+) = a 1,2-diacyl-sn-glycero-3-phosphoethanolamine + CO2. The protein operates within phospholipid metabolism; phosphatidylethanolamine biosynthesis; phosphatidylethanolamine from CDP-diacylglycerol: step 2/2. Catalyzes the formation of phosphatidylethanolamine (PtdEtn) from phosphatidylserine (PtdSer). This is Phosphatidylserine decarboxylase proenzyme from Ruegeria sp. (strain TM1040) (Silicibacter sp.).